We begin with the raw amino-acid sequence, 258 residues long: MKITKIEKKKRLYLLELDDSEKLYITEDTIVHFMLSRGMEITDQELSEIQDYAQFSYGKNLALYHLSFKQRTTKEVKDYLTRHDIQPETISQVLDNLKKDNWVNDRKYANSFIQSNLLTGDKGTFVLKQKLTQKGISSTIIEEELSQFDFTELTDKVAEKLLKKYQGKLPSKALQDKLLQSLINKGFSYSQAKTAYQHLDIEEDQENQEELLYKELDKQYRKYSKKYDGYDLKQRLTQALARKGYDYSDISSVLRDYF.

The protein belongs to the RecX family.

It is found in the cytoplasm. Modulates RecA activity. In Streptococcus gordonii (strain Challis / ATCC 35105 / BCRC 15272 / CH1 / DL1 / V288), this protein is Regulatory protein RecX.